Consider the following 462-residue polypeptide: MAHRTWGGRFGEGPDALAARFNASLAFDRALWREDLWQNRVHARMLHAVGLLSAEELEAILKGLDRIEEEIEAGTFPWREELEDVHMNLEARLTELVGPPGGKLHTARSRNDQVATDLRLYLRGAIDELLALLLALRRVLVREAEKHLDPLYVLPGYTHLQRAQPVLLAHWFLAYYEMLKRDAGRLEDAKERLNESPLGAAALAGTGFPIDRHFTARELGFKAPMRNSLDAVASRDFALEVLSALNIGMLHLSRMAEELILYSTEEFGFVEVPDAFATGSSIMPQKKNPDILELIRAKAGRVLGALVGLSAVVKGLPLAYNKDLQEDKEPLLDALATYRDSLRLLAALLPGLKWRRERMWRAAEGGYTLATELADYLAEKGLPFREAHHVVGRLVRRLVEEGRALKDLTLEELQAHHPLFAEDALPLLRLETAIHRRRSYGGTAPEAVRERLEEAKKEVGLD.

It belongs to the lyase 1 family. Argininosuccinate lyase subfamily.

The protein resides in the cytoplasm. It catalyses the reaction 2-(N(omega)-L-arginino)succinate = fumarate + L-arginine. It functions in the pathway amino-acid biosynthesis; L-arginine biosynthesis; L-arginine from L-ornithine and carbamoyl phosphate: step 3/3. This Thermus thermophilus (strain ATCC BAA-163 / DSM 7039 / HB27) protein is Argininosuccinate lyase.